The following is a 155-amino-acid chain: Ribosome-binding factor A (155 aa).

Basic and acidic residues-rich tracts occupy residues 116 to 125 (ARQRDQEVAR) and 142 to 155 (SPHE…ADGW). The tract at residues 116 to 155 (ARQRDQEVARQAEGATPAGDANPYKTSPHEGRPESEADGW) is disordered.

Belongs to the RbfA family. Monomer. Binds 30S ribosomal subunits, but not 50S ribosomal subunits or 70S ribosomes.

The protein localises to the cytoplasm. Functionally, one of several proteins that assist in the late maturation steps of the functional core of the 30S ribosomal subunit. Associates with free 30S ribosomal subunits (but not with 30S subunits that are part of 70S ribosomes or polysomes). Required for efficient processing of 16S rRNA. May interact with the 5'-terminal helix region of 16S rRNA. The protein is Ribosome-binding factor A of Corynebacterium kroppenstedtii (strain DSM 44385 / JCM 11950 / CIP 105744 / CCUG 35717).